We begin with the raw amino-acid sequence, 332 residues long: L-lactate dehydrogenase A chain (332 aa).

Position 2 is an N-acetylalanine (Ala-2). Lys-5 carries the post-translational modification N6-acetyllysine; alternate. An N6-succinyllysine; alternate modification is found at Lys-5. Position 10 is a phosphotyrosine (Tyr-10). Position 14 is an N6-acetyllysine (Lys-14). Phosphothreonine is present on Thr-18. Residue Gly-29–Lys-57 coordinates NAD(+). N6-acetyllysine; alternate is present on Lys-57. Lys-57 is covalently cross-linked (Glycyl lysine isopeptide (Lys-Gly) (interchain with G-Cter in SUMO2); alternate). Lys-81 carries the post-translational modification N6-acetyllysine. Arg-99 contacts NAD(+). Residue Arg-106 coordinates substrate. Lys-118 bears the N6-acetyllysine; alternate mark. Lys-118 carries the N6-succinyllysine; alternate modification. The residue at position 126 (Lys-126) is an N6-acetyllysine. Asn-138 serves as a coordination point for NAD(+). The substrate site is built by Asn-138 and Arg-169. Residue His-193 is the Proton acceptor of the active site. N6-acetyllysine occurs at positions 224 and 232. Tyr-239 is modified (phosphotyrosine). Lys-243 carries the post-translational modification N6-acetyllysine. Thr-248 serves as a coordination point for substrate. Thr-309 bears the Phosphothreonine mark. A Phosphoserine modification is found at Ser-310. An N6-acetyllysine; alternate modification is found at Lys-318. Lys-318 carries the N6-succinyllysine; alternate modification. At Thr-322 the chain carries Phosphothreonine.

It belongs to the LDH/MDH superfamily. LDH family. Homotetramer. Interacts with PTEN upstream reading frame protein MP31. Interacts with folliculin FLCN; the interaction is direct and inhibits enzymatic activity. In terms of processing, ISGylated. Predominantly expressed in anaerobic tissues such as skeletal muscle and liver.

The protein localises to the cytoplasm. It carries out the reaction (S)-lactate + NAD(+) = pyruvate + NADH + H(+). The protein operates within fermentation; pyruvate fermentation to lactate; (S)-lactate from pyruvate: step 1/1. With respect to regulation, fermentation of pyruvate to lactate is inhibited when bound to folliculin FLCN, perhaps partly by FLCN preventing binding of cofactor NADH. Interconverts simultaneously and stereospecifically pyruvate and lactate with concomitant interconversion of NADH and NAD(+). The chain is L-lactate dehydrogenase A chain from Homo sapiens (Human).